A 294-amino-acid chain; its full sequence is Acetyl-coenzyme A carboxylase carboxyl transferase subunit beta (294 aa).

A CoA carboxyltransferase N-terminal domain is found at 25–294; that stretch reads VWTKCTSCEQ…PLVVPVDGSH (270 aa). Zn(2+) is bound by residues Cys29, Cys32, Cys48, and Cys51. The C4-type zinc-finger motif lies at 29-51; the sequence is CTSCEQVLYSAELERNLEVCPKC.

The protein belongs to the AccD/PCCB family. Acetyl-CoA carboxylase is a heterohexamer composed of biotin carboxyl carrier protein (AccB), biotin carboxylase (AccC) and two subunits each of ACCase subunit alpha (AccA) and ACCase subunit beta (AccD). Zn(2+) is required as a cofactor.

It is found in the cytoplasm. The enzyme catalyses N(6)-carboxybiotinyl-L-lysyl-[protein] + acetyl-CoA = N(6)-biotinyl-L-lysyl-[protein] + malonyl-CoA. Its pathway is lipid metabolism; malonyl-CoA biosynthesis; malonyl-CoA from acetyl-CoA: step 1/1. In terms of biological role, component of the acetyl coenzyme A carboxylase (ACC) complex. Biotin carboxylase (BC) catalyzes the carboxylation of biotin on its carrier protein (BCCP) and then the CO(2) group is transferred by the transcarboxylase to acetyl-CoA to form malonyl-CoA. The chain is Acetyl-coenzyme A carboxylase carboxyl transferase subunit beta from Aliivibrio fischeri (strain MJ11) (Vibrio fischeri).